A 512-amino-acid chain; its full sequence is MTIVLNPGKVTLNQLEAIYWNGEVSKLHNDTHLAIRKGADRIAEIAAGSQPVYGINTGFGKLASIKIDANDVAVLQRNLILSHCCAVGAPLAENIVRLMMTLKLISLGRGASGVRLELVHLLESMLAKGVIPVIPEKGSVGASGDLAPLAHMVAVMIGEGEAFFQNIRMSGAAALEKARLFPITLEAKEGLALINGTQTSTALALAGLFQGYRALCGGLLAGALTTDAVMGSTAPFHPDIHILRGHYGQIVVSQTLEKLIKDSEIRAAHLCDDDHRVQDPYCIRCQPQVMGACFDVLVAAAKTLIIEANAVTDNPLILSNGEVVSGGNFHAEPVAFSADQIALALCEIGSISQRRIALMVDPTVSCGLPPFLAQNAGLNSGFMIAEITAAALMSENKQMAHPASVDSTPTSANQEDHVSMACHGARRLLAMNENLFTIIGIETLAAAQGIEYRAPLKTSSLLQSVMKRLRKNIDTLKVDRYLAPDLHKAHILVREGHLLSVLPEIFPRLEPQ.

Residues 142-144 constitute a cross-link (5-imidazolinone (Ala-Gly)); that stretch reads ASG. Ser-143 is modified (2,3-didehydroalanine (Ser)).

This sequence belongs to the PAL/histidase family. Contains an active site 4-methylidene-imidazol-5-one (MIO), which is formed autocatalytically by cyclization and dehydration of residues Ala-Ser-Gly.

It is found in the cytoplasm. The enzyme catalyses L-histidine = trans-urocanate + NH4(+). The protein operates within amino-acid degradation; L-histidine degradation into L-glutamate; N-formimidoyl-L-glutamate from L-histidine: step 1/3. The chain is Histidine ammonia-lyase from Bartonella quintana (strain Toulouse) (Rochalimaea quintana).